Reading from the N-terminus, the 495-residue chain is Tubulin epsilon and delta complex protein 1 (495 aa).

A coiled-coil region spans residues 355-387 (GGELDLVVRELQALEEELREAAERRRAAWEAKA). Residues 417 to 440 (CWERDGGPAQPHGPHRLVRREDGA) form a disordered region. Residues 452-480 (IRTLRSQEACLEAVLRRLQGQCRQELARL) adopt a coiled-coil conformation.

As to quaternary structure, interacts with TEDC2. Found in a complex with TEDC1, TEDC2, TUBE1 and TUBD1.

The protein localises to the cell projection. It is found in the cilium. Its subcellular location is the cytoplasm. It localises to the cytoskeleton. The protein resides in the microtubule organizing center. The protein localises to the centrosome. It is found in the centriole. Acts as a positive regulator of ciliary hedgehog signaling. Required for centriole stability. May play a role in counteracting perturbation of actin filaments, such as after treatment with the actin depolymerizing microbial metabolite Chivosazole F. This is Tubulin epsilon and delta complex protein 1 from Homo sapiens (Human).